The primary structure comprises 579 residues: Type IV pilus assembly ATPase PilB (579 aa).

340–345 contributes to the ATP binding site; sequence GSGKTV. The Zn(2+) site is built by Cys-470, Cys-473, Cys-507, and Cys-510.

This sequence belongs to the GSP E family. Interacts with CpiA.

The protein resides in the cytoplasm. With respect to regulation, inhibited by the inhibitory protein CpiA. Functionally, ATPase component of the type IV pilus (T4P). Acts as a molecular motor to provide the energy that is required for biogenesis of the pilus and the extrusion of substrates generated in the cytoplasm. PilB is required for optimal T4P extension and, consequently, efficient natural transformation. May promote processive T4P extension. In Acinetobacter baylyi (strain ATCC 33305 / BD413 / ADP1), this protein is Type IV pilus assembly ATPase PilB.